The chain runs to 453 residues: Exopolyphosphatase PRUNE1 (453 aa).

Met1 carries the post-translational modification N-acetylmethionine. Positions 28, 30, 106, and 179 each coordinate Mn(2+). Residues Asp106 to His108 carry the DHH motif motif. The segment at Ser393–Pro420 is essential for homodimerization. Residues Ser396–Cys419 form a disordered region. At Ser399 the chain carries Phosphoserine. Position 410 is a phosphothreonine (Thr410). A Phosphoserine modification is found at Ser414.

It belongs to the PPase class C family. Prune subfamily. As to quaternary structure, homooligomer. Able to homodimerize via its C-terminal domain. Interacts with NME1. Interacts with GSK3; at focal adhesion complexes where paxillin and vinculin are colocalized. Requires Mn(2+) as cofactor.

Its subcellular location is the cytoplasm. It localises to the nucleus. It is found in the cell junction. The protein resides in the focal adhesion. The enzyme catalyses diphosphate + H2O = 2 phosphate + H(+). Activated by magnesium ions and inhibited by manganese ions. Inhibited by dipyridamole, moderately sensitive to IBMX and inhibited by vinpocetine. In terms of biological role, phosphodiesterase (PDE) that has higher activity toward cAMP than cGMP, as substrate. Plays a role in cell proliferation, is able to induce cell motility and acts as a negative regulator of NME1. This is Exopolyphosphatase PRUNE1 (PRUNE1) from Bos taurus (Bovine).